The following is a 463-amino-acid chain: Xanthine permease XanP (463 aa).

Transmembrane regions (helical) follow at residues 43-63, 71-91, 93-113, 126-146, 156-176, 192-212, 222-242, 260-280, 352-372, 379-399, 409-429, and 439-459; these read LLAMFVAVITPALLICQALGL, IISMSLFASGVASIIQIKAWG, VGSGLLSIQGTSFNFVAPLIM, PTMMAALFGTLMLASCTEMVI, IITPLVSGVVVMIIGLSLIQV, TFGAPKNLLLAGVVLALIILL, VASLVIAMAAGYALAWFMGML, LYYGLGIEWSLLLPLMLVFMI, GFVVALMLIVLGLFPAVSGFV, VLGGATLVMFGTIAASGVRIV, ILIIALSLAVGLGVSQQPLIL, and LLSSGIAAGGITAIVLNLIFP.

The protein belongs to the nucleobase:cation symporter-2 (NCS2) (TC 2.A.40) family.

It is found in the cell inner membrane. The enzyme catalyses xanthine(in) + H(+)(in) = xanthine(out) + H(+)(out). Specific, proton motive force-dependent high-affinity transporter for xanthine. This Escherichia coli O6:H1 (strain CFT073 / ATCC 700928 / UPEC) protein is Xanthine permease XanP (xanP).